A 669-amino-acid polypeptide reads, in one-letter code: Diacylglycerol lipase-beta (669 aa).

Over 1 to 17 the chain is Cytoplasmic; the sequence is MPGMVLFGRRWSLASDD. The helical transmembrane segment at 18–38 threads the bilayer; it reads LVFPGSFELFLRVLWWIVSLT. The Extracellular portion of the chain corresponds to 39–58; the sequence is LYLTHRRRLDCPGGVLLSTY. A helical membrane pass occupies residues 59–79; sequence LIVLLVLLAVIICTVLAIVCV. At 80–102 the chain is on the cytoplasmic side; sequence SMRGTICNPGPRKSMSKLLYIRL. The chain crosses the membrane as a helical span at residues 103-123; sequence ALFLPEMVWASLGAAWVAKGI. At 124–128 the chain is on the extracellular side; sequence QCDRT. Residues 129–149 traverse the membrane as a helical segment; sequence VVIGIIATVIVSWIVIAATMV. Over 150 to 669 the chain is Cytoplasmic; that stretch reads TIIFVFDPLG…CPGQGGSSVP (520 aa). Catalysis depends on charge relay system residues S443 and D495. A phosphoserine mark is found at S570, S578, and S582.

Belongs to the AB hydrolase superfamily. Lipase family. The cofactor is Ca(2+). In terms of tissue distribution, expressed in liver and immune cells such as macrophages and microglias. In embryonic brains present in axonal tracts, while in adults localizes to dendritic fields, correlating with the developmental change in requirement for 2-AG synthesis from the pre- to the postsynaptic compartment (at protein level).

The protein resides in the cell membrane. It carries out the reaction a 1,2-diacyl-sn-glycerol + H2O = a 2-acylglycerol + a fatty acid + H(+). The enzyme catalyses 1-octadecanoyl-2-(5Z,8Z,11Z,14Z-eicosatetraenoyl)-sn-glycerol + H2O = 2-(5Z,8Z,11Z,14Z-eicosatetraenoyl)-glycerol + octadecanoate + H(+). The catalysed reaction is 1,2-di-(9Z-octadecenoyl)-sn-glycerol + H2O = 2-(9Z-octadecenoyl)-glycerol + (9Z)-octadecenoate + H(+). It catalyses the reaction 1-(9Z-octadecenoyl)-2-(5Z,8Z,11Z,14Z-eicosatetraenoyl)-sn-glycerol + H2O = 2-(5Z,8Z,11Z,14Z-eicosatetraenoyl)-glycerol + (9Z)-octadecenoate + H(+). It carries out the reaction 1-(9Z-octadecenoyl)-2-octadecanoyl-sn-glycerol + H2O = 2-octadecanoylglycerol + (9Z)-octadecenoate + H(+). The enzyme catalyses 1-(9Z-octadecenoyl)-2-(9Z,12Z-octadecadienoyl)-sn-glycerol + H2O = 2-(9Z,12Z-octadecadienoyl)-glycerol + (9Z)-octadecenoate + H(+). The catalysed reaction is 1-(9Z-octadecenoyl)-2-O-(5Z,8Z,11Z,14Z-eicosatetraenyl)-sn-glycerol + H2O = 2-O-(5Z,8Z,11Z,14Z)-eicosatetraenylglycerol + (9Z)-octadecenoate + H(+). It catalyses the reaction a triacylglycerol + H2O = a diacylglycerol + a fatty acid + H(+). It carries out the reaction 1,2,3-tri-(5Z,8Z,11Z,14Z-eicosatetraenoyl)-glycerol + H2O = 1,2-di-(5Z,8Z,11Z,14Z-eicosatetraenoyl)-glycerol + (5Z,8Z,11Z,14Z)-eicosatetraenoate + H(+). The enzyme catalyses 1,2,3-(4Z,7Z,10Z,13Z,16Z,19Z-docosahexaenoyl)-glycerol + H2O = 1,2-di-(4Z,7Z,10Z,13Z,16Z,19Z-docosahexaenoyl)-glycerol + (4Z,7Z,10Z,13Z,16Z,19Z)-docosahexaenoate + H(+). With respect to regulation, inhibited by the 1,2,3-triazole urea covalent inhibitors KT109 and KT172. Inhibited by p-hydroxy-mercuri-benzoate and HgCl(2), but not by PMSF. Also inhibited by RHC80267, a drug that blocks 2-AG formation. Lipase that catalyzes the hydrolysis of arachidonic acid (AA)-esterified diacylglycerols (DAGs) to produce the principal endocannabinoid, 2-arachidonoylglycerol (2-AG) which can be further cleaved by downstream enzymes to release arachidonic acid (AA) for cyclooxygenase (COX)-mediated eicosanoid production. Preferentially hydrolyzes DAGs at the sn-1 position in a calcium-dependent manner and has negligible activity against other lipids including monoacylglycerols and phospholipids. Plays a key role in the regulation of 2-AG and AA pools utilized by COX1/2 to generate lipid mediators of macrophage and microglia inflammatory responses. Also functions as a polyunsaturated fatty acids-specific triacylglycerol lipase in macrophages. Plays an important role to support the metabolic and signaling demands of macrophages. The chain is Diacylglycerol lipase-beta (Daglb) from Mus musculus (Mouse).